The sequence spans 86 residues: uncharacterized protein (86 aa).

This is an uncharacterized protein from Ovis aries (Sheep).